The chain runs to 1099 residues: SLIT-ROBO Rho GTPase-activating protein 3 (1099 aa).

The 296-residue stretch at 19–314 (AQIKEIRTQL…AVDNLDSRSD (296 aa)) folds into the F-BAR domain. The interval 205-225 (HEDRPQRRSSVKKIEKMKEKR) is disordered. Residues 352–392 (QTELLMRYHQLQSRLATLKIENEEVRKTLDATMQTLQDMLT) are a coiled coil. Residues 471-493 (ERAECGTTRPPCLPPKPQKMRRP) form a disordered region. Residues 506 to 694 (GSMEAFIKDS…TIIIHHEAIF (189 aa)) form the Rho-GAP domain. Residues 744–803 (VEQIEAIAKFDYMGRSPRELSFKKGASLLLYHRASEDWWEGRHNGVDGLIPHQYIVVQDM) form the SH3 domain. The span at 809–820 (DSLSQKADSEAS) shows a compositional bias: polar residues. Residues 809 to 847 (DSLSQKADSEASSGPLLDDKASSKNDLQSPTEHISDYGF) form a disordered region. 5 positions are modified to phosphoserine: Ser817, Ser820, Ser821, Ser837, and Ser858. Disordered stretches follow at residues 861–911 (AAIP…SPEK) and 926–950 (PDKKALSEGHSMRSTCGSTRHSSLG). The segment covering 926-936 (PDKKALSEGHS) has biased composition (basic and acidic residues). A compositionally biased stretch (polar residues) spans 937 to 947 (MRSTCGSTRHS). Residues 952–987 (HKSLEAEALAEDIEKTMSTALHELRELERQNTVKQA) are a coiled coil. Ser954 is modified (phosphoserine). Residues 995 to 1099 (LEPLKNPPGP…NSSADKSGTM (105 aa)) are disordered. Low complexity-rich tracts occupy residues 1026 to 1038 (RRSSSSSTEMMTT) and 1060 to 1074 (VRPVVQHRSSSSSSS). Polar residues predominate over residues 1089-1099 (PNSSADKSGTM).

Homodimer. Forms a heterooligomer with SRGAP1 and SRGAP2 through its F-BAR domain. Interacts with WASF1. Probably interacts with ROBO1. Interacts with FASLG. In terms of tissue distribution, highly expressed in adult and fetal brain. Expressed at low levels in kidney. Isoform 3 is expressed in the kidney but is absent in the brain.

GTPase-activating protein for RAC1 and perhaps Cdc42, but not for RhoA small GTPase. May attenuate RAC1 signaling in neurons. In Homo sapiens (Human), this protein is SLIT-ROBO Rho GTPase-activating protein 3 (SRGAP3).